The chain runs to 765 residues: Protein transport protein Sec23A (765 aa).

N-acetylthreonine is present on threonine 2. Positions 61, 66, 85, and 88 each coordinate Zn(2+). Threonine 308 is subject to Phosphothreonine. Residues 632–718 (PEPVLLDSSS…EHGGSQARFL (87 aa)) form a Gelsolin-like repeat.

The protein belongs to the SEC23/SEC24 family. SEC23 subfamily. In terms of assembly, COPII is composed of at least five proteins: the Sec23/24 complex, the Sec13/31 complex and Sar1. Interacts with SEC23IP. Interacts with HTR4. Interacts with SEC16A. Interacts with SLC6A4. Interacts (as part of the Sec23/24 complex) with SEC22B; recruits SEC22B into COPII-coated vesicles and allows the transport of this cargo from the endoplasmic reticulum to the Golgi. Interacts (via Gelsolin-like repeat) with MIA2 and MIA3; specifically involved in the transport of large cargos like the collagen COL7A1. Interacts with DDHD1. Interacts with TMEM39A. Interacts with SACM1L; this interaction is reduced in the absence of TMEM39A. Interacts with kinase FAM20C; transport of FAM20C from the endoplasmic reticulum to the Golgi is likely to be mediated by COPII vesicles.

It is found in the cytoplasmic vesicle. The protein localises to the COPII-coated vesicle membrane. Its subcellular location is the endoplasmic reticulum membrane. The protein resides in the cytoplasm. It localises to the cytosol. Functionally, component of the coat protein complex II (COPII) which promotes the formation of transport vesicles from the endoplasmic reticulum (ER). The coat has two main functions, the physical deformation of the endoplasmic reticulum membrane into vesicles and the selection of cargo molecules for their transport to the Golgi complex. Required for the translocation of insulin-induced glucose transporter SLC2A4/GLUT4 to the cell membrane. In Pongo abelii (Sumatran orangutan), this protein is Protein transport protein Sec23A.